We begin with the raw amino-acid sequence, 969 residues long: Protein translocase subunit SecA (969 aa).

Residues Q99, 117–121 (GEGKT), and D631 contribute to the ATP site.

It belongs to the SecA family. In terms of assembly, monomer and homodimer. Part of the essential Sec protein translocation apparatus which comprises SecA, SecYEG and auxiliary proteins SecDF. Other proteins may also be involved.

The protein localises to the cell inner membrane. It is found in the cytoplasm. It carries out the reaction ATP + H2O + cellular proteinSide 1 = ADP + phosphate + cellular proteinSide 2.. Part of the Sec protein translocase complex. Interacts with the SecYEG preprotein conducting channel. Has a central role in coupling the hydrolysis of ATP to the transfer of proteins into and across the cell membrane, serving as an ATP-driven molecular motor driving the stepwise translocation of polypeptide chains across the membrane. The chain is Protein translocase subunit SecA from Chlamydia trachomatis serovar L2 (strain ATCC VR-902B / DSM 19102 / 434/Bu).